We begin with the raw amino-acid sequence, 266 residues long: Energy-coupling factor transporter transmembrane protein EcfT (266 aa).

The next 7 membrane-spanning stretches (helical) occupy residues 26–46 (VIATLLFSIALFLLPTLRSVT), 47–67 (LAGLPIIIAIVATRLPIHYIL), 69–89 (GIKPLWIFIVFTLLVHLLSTP), 116–136 (LIWLYAATSLLTLTTSPIALT), 151–171 (LPVHEFAMMTSIALRFIPTLI), 192–212 (SLVARVKSLVPLMVPLLLSAF), and 246–266 (YAVTVAVSGVFILICLWKKAL).

This sequence belongs to the energy-coupling factor EcfT family. Forms a stable energy-coupling factor (ECF) transporter complex composed of 2 membrane-embedded substrate-binding proteins (S component), 2 ATP-binding proteins (A component) and 2 transmembrane proteins (T component). May be able to interact with more than 1 S component at a time.

It is found in the cell membrane. Transmembrane (T) component of an energy-coupling factor (ECF) ABC-transporter complex. Unlike classic ABC transporters this ECF transporter provides the energy necessary to transport a number of different substrates. The sequence is that of Energy-coupling factor transporter transmembrane protein EcfT from Heliobacterium modesticaldum (strain ATCC 51547 / Ice1).